Consider the following 101-residue polypeptide: Large ribosomal subunit protein eL30 (101 aa).

The protein belongs to the eukaryotic ribosomal protein eL30 family.

The sequence is that of Large ribosomal subunit protein eL30 from Pyrobaculum neutrophilum (strain DSM 2338 / JCM 9278 / NBRC 100436 / V24Sta) (Thermoproteus neutrophilus).